The primary structure comprises 270 residues: MAATKQGGGDDGRCARGVVLERTGARMGAERVALLAAIGRTGSISAAAREVGLSYKAAWDGVQAMNNLLAAPVVTAAPGGKAGGGAVLTPAGEKLIAAYGAIEAGVAKLLSSFEKSLNLDPAEVLRGLSLRTSARNAWACKVWSVAADDVAAQVRMRLGEGQDLTAVITARSAAEMRLAPGSEVLALVKSNFVLLAGAGVPERLSVRNRVRGRVIERIDAPLSSEVTLDLGGGKTITATITRDSAEMLDLHPGVETTALIKSSHVILALP.

Mop domains lie at 131 to 197 (RTSA…LLAG) and 203 to 269 (RLSV…ILAL).

This sequence belongs to the ModE family.

The chain is Molybdenum-pterin-binding protein MopB (mopB) from Rhodobacter capsulatus (Rhodopseudomonas capsulata).